Reading from the N-terminus, the 224-residue chain is uncharacterized protein (224 aa).

In terms of domain architecture, HTH gntR-type spans 10-77 (TPYYLQFYNQ…DRNGFSITSL (68 aa)). Positions 37-56 (ETQLAKSFGVSRSPIREAMR) form a DNA-binding region, H-T-H motif.

This is an uncharacterized protein from Bacillus subtilis (strain 168).